The following is a 209-amino-acid chain: BAG family molecular chaperone regulator 1 (209 aa).

Residues 7-84 (CSSVQTIVDI…IIVMGGKNAM (78 aa)) enclose the Ubiquitin-like domain. The BAG domain maps to 107-193 (TYDVNLKDVA…TLLNQNDALL (87 aa)).

Homodimer or homotetramer.

Functionally, may inhibit the chaperone activity of HSP70/HSC70 by promoting substrate release in an ATP-dependent manner. This is BAG family molecular chaperone regulator 1 (bag-1) from Caenorhabditis briggsae.